The primary structure comprises 489 residues: Aklavinone 12-hydroxylase DnrF (489 aa).

FAD-binding positions include 17-18 (LG), E37, Q121, and L145. Y224 serves as the catalytic Proton acceptor. D308 is an FAD binding site. G317 contributes to the aklavinone binding site. 2 disordered regions span residues 402–428 (VAAE…RAPH) and 455–489 (EGGA…PPAN). Residues 468–482 (RIWASASTSISSAAM) are compositionally biased toward low complexity.

The protein belongs to the PheA/TfdB FAD monooxygenase family. Monomer. FAD is required as a cofactor.

The enzyme catalyses aklavinone + NADPH + O2 + H(+) = epsilon-rhodomycinone + NADP(+) + H2O. Its pathway is antibiotic biosynthesis; daunorubicin biosynthesis. The protein operates within antibiotic biosynthesis; carminomycin biosynthesis. It participates in antibiotic biosynthesis; rhodomycin biosynthesis. In terms of biological role, involved in the biosynthesis of the anthracyclines carminomycin, rhodomycin and daunorubicin (daunomycin) which are aromatic polyketide antibiotics that exhibit high cytotoxicity and are widely applied in the chemotherapy of a variety of cancers. Catalyzes the incorporation of a hydroxyl group at position C-11 of aklavinone, resulting in epsilon-rhodomycinone. It cannot accept substrates glycosylated at position C-7. It can also hydroxylate 11-deoxycarminomycinone and can use both NAD or NADP. This chain is Aklavinone 12-hydroxylase DnrF (dnrF), found in Streptomyces peucetius.